The sequence spans 497 residues: Serine hydroxymethyltransferase (497 aa).

(6S)-5,6,7,8-tetrahydrofolate contacts are provided by residues Leu176 and 180–182 (GHL). Position 289 is an N6-(pyridoxal phosphate)lysine (Lys289).

Belongs to the SHMT family. Homodimer. Requires pyridoxal 5'-phosphate as cofactor.

The protein localises to the cytoplasm. It carries out the reaction (6R)-5,10-methylene-5,6,7,8-tetrahydrofolate + glycine + H2O = (6S)-5,6,7,8-tetrahydrofolate + L-serine. The protein operates within one-carbon metabolism; tetrahydrofolate interconversion. It functions in the pathway amino-acid biosynthesis; glycine biosynthesis; glycine from L-serine: step 1/1. In terms of biological role, catalyzes the reversible interconversion of serine and glycine with tetrahydrofolate (THF) serving as the one-carbon carrier. This reaction serves as the major source of one-carbon groups required for the biosynthesis of purines, thymidylate, methionine, and other important biomolecules. Also exhibits THF-independent aldolase activity toward beta-hydroxyamino acids, producing glycine and aldehydes, via a retro-aldol mechanism. The polypeptide is Serine hydroxymethyltransferase (Chlamydia trachomatis serovar A (strain ATCC VR-571B / DSM 19440 / HAR-13)).